The chain runs to 456 residues: Cysteine--tRNA ligase (456 aa).

Cys-28 lines the Zn(2+) pocket. Positions 30–40 match the 'HIGH' region motif; that stretch reads ITVYDHCHLGH. 3 residues coordinate Zn(2+): Cys-209, His-234, and Glu-238. A 'KMSKS' region motif is present at residues 266 to 270; that stretch reads KMAKS. An ATP-binding site is contributed by Lys-269.

It belongs to the class-I aminoacyl-tRNA synthetase family. In terms of assembly, monomer. The cofactor is Zn(2+).

It localises to the cytoplasm. The enzyme catalyses tRNA(Cys) + L-cysteine + ATP = L-cysteinyl-tRNA(Cys) + AMP + diphosphate. In Legionella pneumophila (strain Corby), this protein is Cysteine--tRNA ligase.